Reading from the N-terminus, the 478-residue chain is UBP1-associated protein 2A (478 aa).

Residues 1-99 (MTKKRKLEGE…NQEDDDDEPI (99 aa)) are disordered. Residues 41–75 (GDVEEVEYEEVEEEQEEEVEDDDDEDDGDENEDQT) are compositionally biased toward acidic residues. RRM domains follow at residues 140-217 (RKIF…LASK) and 245-328 (KKIY…KPGK). 2 disordered regions span residues 321–359 (IDGPKPGKQQQHHHNPHAYNNPRYQRNDNNGYGPPGGHG) and 442–478 (GTQPGLQGGYQTPQPGQGGTSRGQHGVGPYGTPYMGH). A compositionally biased stretch (low complexity) spans 442–456 (GTQPGLQGGYQTPQP). The span at 457-470 (GQGGTSRGQHGVGP) shows a compositional bias: gly residues.

As to quaternary structure, interacts with UBA1A, UBA2A, UBP1A, UBP1B, UBP1C and SRK2E. In terms of tissue distribution, expressed in young leaves, flowers and embryos.

It is found in the nucleus. Functionally, heterogeneous nuclear ribonucleoprotein (hnRNP)-like protein that acts as a component of a complex regulating the turnover of mRNAs in the nucleus. Binds with high affinity to RNA molecules that contain U-rich sequences in 3'-UTRs. May function in complex with UBP1 and contribute to the stabilization of mRNAs in the nucleus. However, unlike UBP1, UBA2A does not stimulate pre-mRNA splicing. This Arabidopsis thaliana (Mouse-ear cress) protein is UBP1-associated protein 2A (UBA2A).